The chain runs to 316 residues: Elongation factor Ts, mitochondrial (316 aa).

The transit peptide at 1 to 18 (MFARAPFVRLLSTTSRNL) directs the protein to the mitochondrion. The disordered stretch occupies residues 245 to 269 (EAAESVKTQEGLRSQEGHDPNADPV).

The protein belongs to the EF-Ts family.

It localises to the mitochondrion. Its function is as follows. Associates with the EF-Tu.GDP complex and induces the exchange of GDP to GTP. It remains bound to the aminoacyl-tRNA.EF-Tu.GTP complex up to the GTP hydrolysis stage on the ribosome. The polypeptide is Elongation factor Ts, mitochondrial (Caenorhabditis elegans).